Reading from the N-terminus, the 277-residue chain is MGIKTYKPKTSSLRYKTTLSFDDLSKGNDPLKSLTKGKKFKSGRDSSGRISIRRRGGGHKRKYRLIDFNRRDKFSIPARVASIEYDPNRSANIALLVYKDGEKRYIISPKGIKVGDVLESGPNAPIKIGNALPLENIPIGRTVHNIELNVGKGGQLIRSAGGYAMILASDGNYVTVKLSSGEMRLIFKKCIATIGEIGNEDYANISIGKAGKSRWLGRRPKVRGVAMNPVDHPHGGGEGKTSGGRHPVSPWGQPTKGYKTRKKKRYSDKFIIKRRNK.

Disordered stretches follow at residues 32–58 and 225–277; these read KSLT…RGGG and VAMN…RRNK. Residues 258–277 are compositionally biased toward basic residues; the sequence is YKTRKKKRYSDKFIIKRRNK.

This sequence belongs to the universal ribosomal protein uL2 family. Part of the 50S ribosomal subunit. Forms a bridge to the 30S subunit in the 70S ribosome.

One of the primary rRNA binding proteins. Required for association of the 30S and 50S subunits to form the 70S ribosome, for tRNA binding and peptide bond formation. It has been suggested to have peptidyltransferase activity; this is somewhat controversial. Makes several contacts with the 16S rRNA in the 70S ribosome. This is Large ribosomal subunit protein uL2 from Borreliella burgdorferi (strain ATCC 35210 / DSM 4680 / CIP 102532 / B31) (Borrelia burgdorferi).